Reading from the N-terminus, the 196-residue chain is Peroxisome assembly protein 22 (196 aa).

Residues 15-37 traverse the membrane as a helical segment; sequence LWIAALVAASIVTISYKVYSSYI.

The protein belongs to the peroxin-22 family.

The protein localises to the peroxisome membrane. In terms of biological role, involved in peroxisome biogenesis. This Debaryomyces hansenii (strain ATCC 36239 / CBS 767 / BCRC 21394 / JCM 1990 / NBRC 0083 / IGC 2968) (Yeast) protein is Peroxisome assembly protein 22 (PEX22).